The primary structure comprises 335 residues: Dolichyl-diphosphooligosaccharide--protein glycosyltransferase subunit MAGT1 (335 aa).

An N-terminal signal peptide occupies residues 1–29; the sequence is MASPRWFWSVCAIAAVALLLVSKVPSASA. Topologically, residues 30 to 184 are extracellular; it reads QRKKEMVLSE…DVNIRVIRPP (155 aa). One can recognise a Thioredoxin domain in the interval 47 to 175; the sequence is WANKRPVIRM…IARWIADRTD (129 aa). Asn71 is a glycosylation site (N-linked (GlcNAc...) asparagine). Residues Cys87 and Cys90 are joined by a disulfide bond. Residues 185-205 form a helical membrane-spanning segment; sequence NYAGPLMLGLLLAVIGGLVYL. The Cytoplasmic segment spans residues 206 to 209; that stretch reads RRSN. The chain crosses the membrane as a helical span at residues 210 to 230; it reads MEFLFNKTGWAFAALCFVLAM. Over 231–270 the chain is Extracellular; the sequence is TSGQMWNHIRGPPYAHKNPHTGHVNYIHGSSQAQFVAETH. A helical transmembrane segment spans residues 271–291; it reads IVLLFNGGVTLGMVLLCEAAT. At 292–300 the chain is on the cytoplasmic side; it reads SDMDIGKRR. Residues 301-321 form a helical membrane-spanning segment; it reads MMCIAGIGLVVLFFSWMLSIF. Over 322–335 the chain is Extracellular; the sequence is RSKYHGYPYSFLMS.

This sequence belongs to the OST3/OST6 family. Accessory component of the STT3B-containing form of the oligosaccharyltransferase (OST) complex. OST exists in two different complex forms which contain common core subunits RPN1, RPN2, OST48, OST4, DAD1 and TMEM258, either STT3A or STT3B as catalytic subunits, and form-specific accessory subunits. OST can form stable complexes with the Sec61 complex or with both the Sec61 and TRAP complexes. The association of TUSC3 or MAGT1 with the STT3B-containing complex seems to be mutually exclusvice. In terms of tissue distribution, expressed at high levels in kidney, colon, heart and liver. Expressed at lower levels in intestine, spleen, brain and lung.

The protein localises to the cell membrane. It is found in the endoplasmic reticulum. It localises to the endoplasmic reticulum membrane. Its pathway is protein modification; protein glycosylation. In terms of biological role, accessory component of the STT3B-containing form of the N-oligosaccharyl transferase (OST) complex which catalyzes the transfer of a high mannose oligosaccharide from a lipid-linked oligosaccharide donor to an asparagine residue within an Asn-X-Ser/Thr consensus motif in nascent polypeptide chains. Involved in N-glycosylation of STT3B-dependent substrates. Specifically required for the glycosylation of a subset of acceptor sites that are near cysteine residues; in this function seems to act redundantly with TUSC3. In its oxidized form proposed to form transient mixed disulfides with a glycoprotein substrate to facilitate access of STT3B to the unmodified acceptor site. Also has oxidoreductase-independent functions in the STT3B-containing OST complex possibly involving substrate recognition. Could indirectly play a role in Mg(2+) transport in epithelial cells. This Mus musculus (Mouse) protein is Dolichyl-diphosphooligosaccharide--protein glycosyltransferase subunit MAGT1.